Reading from the N-terminus, the 735-residue chain is Rho GTPase-activating protein SYDE1 (735 aa).

3 disordered regions span residues 1–253 (MAEP…PYEV), 601–655 (PDTR…AGDW), and 669–706 (FLSGPDYDHVTGSDSEEDEDESGEPRGTTDFEDEFDAP). The segment covering 14–47 (RGREKLPRKKSDAKDRGRPAQRSEPKPPEPEPRV) has biased composition (basic and acidic residues). Low complexity predominate over residues 151 to 160 (PTKTSRTKSP). S224, S231, S235, and S244 each carry phosphoserine. In terms of domain architecture, C2 spans 249-366 (RPYEVGPSAR…FRGCQAQQLA (118 aa)). Residues 398–604 (LPLQLLVERE…YLLQSWPDTR (207 aa)) form the Rho-GAP domain. The segment covering 669–679 (FLSGPDYDHVT) has biased composition (basic and acidic residues). Phosphoserine occurs at positions 681 and 683.

Palmitoylated. Probably palmitoylated by ZDHHC3 and ZDHHC7.

Its function is as follows. GTPase activator for the Rho-type GTPases. As a GCM1 downstream effector, it is involved in placental development and positively regulates trophoblast cells migration. It regulates cytoskeletal remodeling by controlling the activity of Rho GTPases including RHOA, CDC42 and RAC1. The sequence is that of Rho GTPase-activating protein SYDE1 (Syde1) from Rattus norvegicus (Rat).